Here is a 114-residue protein sequence, read N- to C-terminus: Cytokine SCM-1 beta (114 aa).

Residues 1–21 (MRLLILALLGICSLTAYIVEG) form the signal peptide. Cysteines 32 and 69 form a disulfide. Residues 91–114 (RNNMIQTKPTGTQQSTNTAVTLTG) form a disordered region.

It belongs to the intercrine gamma family.

The protein localises to the secreted. Functionally, chemotactic activity for lymphocytes but not for monocytes or neutrophils. In Homo sapiens (Human), this protein is Cytokine SCM-1 beta (XCL2).